A 67-amino-acid polypeptide reads, in one-letter code: Large ribosomal subunit protein eL24 (67 aa).

4 residues coordinate Zn(2+): C7, C10, C33, and C37. The C4-type zinc-finger motif lies at 7 to 37 (CSYCGKPFEPGTGKMFVRNDGRVLFFCSRKC).

The protein belongs to the eukaryotic ribosomal protein eL24 family. Part of the 50S ribosomal subunit. Forms a cluster with proteins L3 and L14. Requires Zn(2+) as cofactor.

In terms of biological role, binds to the 23S rRNA. In Pyrococcus abyssi (strain GE5 / Orsay), this protein is Large ribosomal subunit protein eL24.